Reading from the N-terminus, the 380-residue chain is Flagellar P-ring protein (380 aa).

The N-terminal stretch at 1–35 (MRFFTQSPFPLRTLTRRLTAFVCVGLLLLPGFTLA) is a signal peptide.

It belongs to the FlgI family. In terms of assembly, the basal body constitutes a major portion of the flagellar organelle and consists of four rings (L,P,S, and M) mounted on a central rod.

Its subcellular location is the periplasm. It localises to the bacterial flagellum basal body. Its function is as follows. Assembles around the rod to form the L-ring and probably protects the motor/basal body from shearing forces during rotation. This is Flagellar P-ring protein from Gluconobacter oxydans (strain 621H) (Gluconobacter suboxydans).